We begin with the raw amino-acid sequence, 126 residues long: Methylglyoxal synthase (126 aa).

The MGS-like domain maps to 1–126; that stretch reads MKALALIAHD…IAWIRKGTPQ (126 aa). Substrate-binding positions include histidine 9, lysine 13, 35 to 38, and 55 to 56; these read TGTT and SG. Catalysis depends on aspartate 61, which acts as the Proton donor/acceptor. Histidine 88 contacts substrate.

It belongs to the methylglyoxal synthase family.

The enzyme catalyses dihydroxyacetone phosphate = methylglyoxal + phosphate. In terms of biological role, catalyzes the formation of methylglyoxal from dihydroxyacetone phosphate. This is Methylglyoxal synthase from Thermus thermophilus (strain ATCC BAA-163 / DSM 7039 / HB27).